Here is a 413-residue protein sequence, read N- to C-terminus: Probable protein phosphatase 2C 78 (413 aa).

Residues 21–40 (KKATTTTRRRERSSSQAARR) form a disordered region. The PPM-type phosphatase domain occupies 111 to 409 (KYGVASVCGR…DNVSVVVVDL (299 aa)). 4 residues coordinate Mn(2+): Asp-153, Gly-154, Asp-327, and Asp-400.

Belongs to the PP2C family. Mg(2+) is required as a cofactor. Mn(2+) serves as cofactor.

It is found in the golgi apparatus. It localises to the nucleus. It carries out the reaction O-phospho-L-seryl-[protein] + H2O = L-seryl-[protein] + phosphate. The catalysed reaction is O-phospho-L-threonyl-[protein] + H2O = L-threonyl-[protein] + phosphate. In terms of biological role, acts as a negative regulator of abscisic acid (ABA) signaling for stomatal closure in leaves, and controls water loss during leaf senescence. Activated by the NAC029/NAP transcription factor during ABA signaling in senescing leaves. Functions as a negative regulator of osmotic stress and ABA signaling. Acts as a negative regulator of response to drought. This chain is Probable protein phosphatase 2C 78, found in Arabidopsis thaliana (Mouse-ear cress).